Here is a 61-residue protein sequence, read N- to C-terminus: 2S seed storage albumin protein (61 aa).

The protein belongs to the 2S seed storage albumins family. In terms of assembly, the mature protein consists of a small and a large chain linked by 2 disulfide bonds.

Its function is as follows. This is a 2S seed storage protein. Inhibits cell-free protein synthesis. The polypeptide is 2S seed storage albumin protein (Cucurbita moschata (Winter crookneck squash)).